Here is a 1176-residue protein sequence, read N- to C-terminus: Pesticidal crystal protein Cry1Aa (1176 aa).

This sequence belongs to the delta endotoxin family.

Functionally, promotes colloidosmotic lysis by binding to the midgut epithelial cells of many lepidopteran larvae. The polypeptide is Pesticidal crystal protein Cry1Aa (cry1Aa) (Bacillus thuringiensis subsp. entomocidus).